The chain runs to 301 residues: 2-oxo-3-(phosphooxy)propyl 3-oxoalkanoate synthase (301 aa).

The protein belongs to the AfsA family.

The enzyme catalyses a medium-chain 3-oxoacyl-[ACP] + dihydroxyacetone phosphate = a (4-alkanoyl-5-oxo-2,5-dihydrofuran-3-yl)methyl phosphate + holo-[ACP] + H2O. In terms of biological role, involved in the biosynthesis of A factor (2-isocapryloyl-3R-hydroxymethyl-gamma-butyrolactone), a gamma-butyrolactone autoregulator that triggers secondary metabolism and morphogenesis in Streptomyces. Catalyzes beta-ketoacyl transfer from 8-methyl-3-oxononanoyl-acyl carrier protein (ACP) to the hydroxyl group of dihydroxyacetone phosphate (DHAP), thus producing an 8-methyl-3-oxononanoyl-DHAP ester. The protein is 2-oxo-3-(phosphooxy)propyl 3-oxoalkanoate synthase of Streptomyces griseus.